The sequence spans 291 residues: N-acetylmannosamine kinase (291 aa).

ATP is bound by residues 5 to 12 (AIDIGGTK) and 132 to 139 (GVGGGVVS). Zn(2+) contacts are provided by H156, C166, C168, and C173.

This sequence belongs to the ROK (NagC/XylR) family. NanK subfamily. Homodimer.

It carries out the reaction an N-acyl-D-mannosamine + ATP = an N-acyl-D-mannosamine 6-phosphate + ADP + H(+). The protein operates within amino-sugar metabolism; N-acetylneuraminate degradation; D-fructose 6-phosphate from N-acetylneuraminate: step 2/5. In terms of biological role, catalyzes the phosphorylation of N-acetylmannosamine (ManNAc) to ManNAc-6-P. This Escherichia coli O157:H7 protein is N-acetylmannosamine kinase.